The sequence spans 307 residues: tRNA pseudouridine synthase B (307 aa).

The Nucleophile role is filled by aspartate 38.

This sequence belongs to the pseudouridine synthase TruB family. Type 1 subfamily.

The catalysed reaction is uridine(55) in tRNA = pseudouridine(55) in tRNA. Its function is as follows. Responsible for synthesis of pseudouridine from uracil-55 in the psi GC loop of transfer RNAs. This is tRNA pseudouridine synthase B from Bacillus thuringiensis (strain Al Hakam).